A 226-amino-acid polypeptide reads, in one-letter code: Leucyl/phenylalanyl-tRNA--protein transferase (226 aa).

Belongs to the L/F-transferase family.

Its subcellular location is the cytoplasm. It catalyses the reaction N-terminal L-lysyl-[protein] + L-leucyl-tRNA(Leu) = N-terminal L-leucyl-L-lysyl-[protein] + tRNA(Leu) + H(+). The enzyme catalyses N-terminal L-arginyl-[protein] + L-leucyl-tRNA(Leu) = N-terminal L-leucyl-L-arginyl-[protein] + tRNA(Leu) + H(+). It carries out the reaction L-phenylalanyl-tRNA(Phe) + an N-terminal L-alpha-aminoacyl-[protein] = an N-terminal L-phenylalanyl-L-alpha-aminoacyl-[protein] + tRNA(Phe). Its function is as follows. Functions in the N-end rule pathway of protein degradation where it conjugates Leu, Phe and, less efficiently, Met from aminoacyl-tRNAs to the N-termini of proteins containing an N-terminal arginine or lysine. In Pseudomonas fluorescens (strain ATCC BAA-477 / NRRL B-23932 / Pf-5), this protein is Leucyl/phenylalanyl-tRNA--protein transferase.